The sequence spans 344 residues: Protein RecA (344 aa).

Gly-65–Thr-72 provides a ligand contact to ATP. Residues Glu-323–Ala-337 are compositionally biased toward basic and acidic residues. A disordered region spans residues Glu-323–Glu-344.

The protein belongs to the RecA family.

Its subcellular location is the cytoplasm. Functionally, can catalyze the hydrolysis of ATP in the presence of single-stranded DNA, the ATP-dependent uptake of single-stranded DNA by duplex DNA, and the ATP-dependent hybridization of homologous single-stranded DNAs. It interacts with LexA causing its activation and leading to its autocatalytic cleavage. The chain is Protein RecA from Xanthomonas euvesicatoria pv. vesicatoria (strain 85-10) (Xanthomonas campestris pv. vesicatoria).